We begin with the raw amino-acid sequence, 141 residues long: Hemoglobin subunit alpha (141 aa).

The region spanning V1–R141 is the Globin domain. S3 is modified (phosphoserine). An N6-succinyllysine modification is found at K7. T8 is modified (phosphothreonine). The residue at position 11 (K11) is an N6-succinyllysine. Residue K16 is modified to N6-acetyllysine; alternate. K16 is subject to N6-succinyllysine; alternate. Y24 carries the phosphotyrosine modification. S35 is subject to Phosphoserine. The residue at position 40 (K40) is an N6-succinyllysine. S49 is subject to Phosphoserine. H58 is a binding site for O2. Residue H87 coordinates heme b. S102 is subject to Phosphoserine. The residue at position 108 (T108) is a Phosphothreonine. 2 positions are modified to phosphoserine: S124 and S131. Phosphothreonine is present on residues T134 and T137. The residue at position 138 (S138) is a Phosphoserine.

Belongs to the globin family. As to quaternary structure, heterotetramer of two alpha chains and two beta chains. In terms of tissue distribution, red blood cells.

Functionally, involved in oxygen transport from the lung to the various peripheral tissues. Hemopressin acts as an antagonist peptide of the cannabinoid receptor CNR1. Hemopressin-binding efficiently blocks cannabinoid receptor CNR1 and subsequent signaling. This chain is Hemoglobin subunit alpha (HBA), found in Urocitellus parryii (Arctic ground squirrel).